We begin with the raw amino-acid sequence, 200 residues long: Large ribosomal subunit protein uL4 (200 aa).

The interval 43–71 (RAQKTRAEVSGSGKKPWRQKGTGRARSGD) is disordered.

This sequence belongs to the universal ribosomal protein uL4 family. In terms of assembly, part of the 50S ribosomal subunit.

In terms of biological role, one of the primary rRNA binding proteins, this protein initially binds near the 5'-end of the 23S rRNA. It is important during the early stages of 50S assembly. It makes multiple contacts with different domains of the 23S rRNA in the assembled 50S subunit and ribosome. Functionally, forms part of the polypeptide exit tunnel. The polypeptide is Large ribosomal subunit protein uL4 (Histophilus somni (strain 129Pt) (Haemophilus somnus)).